We begin with the raw amino-acid sequence, 901 residues long: Desmocollin-2 (901 aa).

An N-terminal signal peptide occupies residues 1–27 (MEAARPSGSWNGALCRLLLLTLAILIF). Positions 28-135 (ASDACKNVTL…KEKVLRRAKR (108 aa)) are excised as a propeptide. 2 N-linked (GlcNAc...) asparagine glycosylation sites follow: Asn-34 and Asn-166. Cadherin domains lie at 136 to 243 (RWAP…YPIF), 244 to 355 (TEET…LPTF), 356 to 471 (TRTS…GPEC), 472 to 579 (NPPI…FIPK), and 580 to 694 (KTVI…QLGK). At 136 to 694 (RWAPIPCSML…IGGGGVQLGK (559 aa)) the chain is on the extracellular side. Asn-392 carries N-linked (GlcNAc...) (complex) asparagine glycosylation. N-linked (GlcNAc...) asparagine glycosylation is found at Asn-546 and Asn-629. Residues 695 to 715 (WAILAILLGIALLFCILFTLV) form a helical membrane-spanning segment. The Cytoplasmic portion of the chain corresponds to 716 to 901 (CGASGTSKQP…RTLAEACMKR (186 aa)). Ser-864, Ser-868, and Ser-873 each carry phosphoserine.

In terms of assembly, interacts with DSP, PKP2 and JUP. Interacts with DSG3; the interaction may limit the interaction of DSC3 with p38MAPK family members and therefore repress p38MAPK signaling activation. In terms of tissue distribution, expressed at intercalated disks in the heart, where it is colocalized with CDH2 (at protein level). Expressed in intestinal mucosal cells (at protein level).

The protein resides in the cell membrane. The protein localises to the cell junction. It localises to the desmosome. In terms of biological role, a component of desmosome cell-cell junctions which are required for positive regulation of cellular adhesion. Promotes timely incorporation of DSG2 into desmosome intercellular junctions and promotes interaction of desmosome cell junctions with intermediate filament cytokeratin, via modulation of DSP phosphorylation. Plays an important role in desmosome-mediated maintenance of intestinal epithelial cell intercellular adhesion strength and barrier function. Positively regulates wound healing of intestinal mucosa via promotion of epithelial cell migration, and also plays a role in mechanotransduction of force between intestinal epithelial cells and extracellular matrix. May contribute to epidermal cell positioning (stratification) by mediating differential adhesiveness between cells that express different isoforms. May promote p38MAPK signaling activation that facilitates keratinocyte migration. This Homo sapiens (Human) protein is Desmocollin-2.